Here is a 259-residue protein sequence, read N- to C-terminus: Type III pantothenate kinase (259 aa).

6–13 serves as a coordination point for ATP; it reads DIGNTNVV. 107 to 110 lines the substrate pocket; that stretch reads GADR. The Proton acceptor role is filled by Asp-109. Asp-129 contacts K(+). Thr-132 provides a ligand contact to ATP. Substrate is bound at residue Thr-184.

Belongs to the type III pantothenate kinase family. In terms of assembly, homodimer. NH4(+) is required as a cofactor. K(+) serves as cofactor.

It is found in the cytoplasm. The catalysed reaction is (R)-pantothenate + ATP = (R)-4'-phosphopantothenate + ADP + H(+). It functions in the pathway cofactor biosynthesis; coenzyme A biosynthesis; CoA from (R)-pantothenate: step 1/5. In terms of biological role, catalyzes the phosphorylation of pantothenate (Pan), the first step in CoA biosynthesis. In Thermomicrobium roseum (strain ATCC 27502 / DSM 5159 / P-2), this protein is Type III pantothenate kinase.